The following is a 224-amino-acid chain: MSIESSSTESSPNTEALQLNGTEVRILGCLIEKQATNPETYPLTLNALVTACNQKTSRDPVMNLTQGQVGQSLRALEGRGLTRLVMGSRADRWEHRVDKGLELVPAQVILTGLLLLRGPQTVNELLTRSNRMHDFEDSEQVVHQLERLIARGLAMLVPRQSGQREDRYMHLLGDPESLQELLAARQQAPERHSASPAANSRIDELEARVAALEERLARLEHAEE.

Belongs to the UPF0502 family.

In Pseudomonas syringae pv. syringae (strain B728a), this protein is UPF0502 protein Psyr_2419.